Here is a 187-residue protein sequence, read N- to C-terminus: MKNIIFMGPPGAGKGTQAKILCARLSIPQISTGDILREAVKNQTPMGIEAKRYMDAGDLVPDSVVIGIIKDRIREADCKNGFLLDGFPRTVEQADALDALLKNEGKSIDKAINLEVPDGELLKRLLGRAEIEGRADDNEATIKNRLDNYNKKTLPLLDFYAAQKKLSQVNGVGTLEEVTSLIQRELV.

Residue 11–16 (GAGKGT) coordinates ATP. Positions 31–60 (STGDILREAVKNQTPMGIEAKRYMDAGDLV) are NMP. AMP-binding positions include Thr-32, Arg-37, 58–60 (DLV), 86–89 (GFPR), and Gln-93. Residues 127–137 (GRAEIEGRADD) form an LID region. Arg-128 provides a ligand contact to ATP. Positions 134 and 145 each coordinate AMP. Gly-173 is an ATP binding site.

This sequence belongs to the adenylate kinase family. Monomer.

The protein resides in the cytoplasm. The enzyme catalyses AMP + ATP = 2 ADP. It functions in the pathway purine metabolism; AMP biosynthesis via salvage pathway; AMP from ADP: step 1/1. Functionally, catalyzes the reversible transfer of the terminal phosphate group between ATP and AMP. Plays an important role in cellular energy homeostasis and in adenine nucleotide metabolism. The chain is Adenylate kinase from Leptospira borgpetersenii serovar Hardjo-bovis (strain JB197).